Reading from the N-terminus, the 254-residue chain is D-aminoacyl-tRNA deacylase (254 aa).

Belongs to the DtdA deacylase family. As to quaternary structure, monomer. Zn(2+) serves as cofactor.

It catalyses the reaction a D-aminoacyl-tRNA + H2O = a tRNA + a D-alpha-amino acid + H(+). The catalysed reaction is glycyl-tRNA(Ala) + H2O = tRNA(Ala) + glycine + H(+). Its function is as follows. D-aminoacyl-tRNA deacylase with broad substrate specificity. By recycling D-aminoacyl-tRNA to D-amino acids and free tRNA molecules, this enzyme counteracts the toxicity associated with the formation of D-aminoacyl-tRNA entities in vivo. The chain is D-aminoacyl-tRNA deacylase from Methanococcus vannielii (strain ATCC 35089 / DSM 1224 / JCM 13029 / OCM 148 / SB).